A 429-amino-acid polypeptide reads, in one-letter code: Violacein synthase (429 aa).

An FAD-binding site is contributed by 3-21 (RAIIVGGGLAGGLTAIYLA).

It depends on FAD as a cofactor.

It catalyses the reaction protoviolaceinate + NADPH + O2 + H(+) = violaceinate + NADP(+) + H2O. The catalysed reaction is protoviolaceinate + NADH + O2 + H(+) = violaceinate + NAD(+) + H2O. The enzyme catalyses protodeoxyviolaceinate + NADPH + O2 + H(+) = deoxyviolaceinate + NADP(+) + H2O. It carries out the reaction protodeoxyviolaceinate + NADH + O2 + H(+) = deoxyviolaceinate + NAD(+) + H2O. It functions in the pathway pigment biosynthesis; violacein biosynthesis. Functionally, catalyzes the hydroxylation of the 16-position of protoviolaceinate and protodeoxyviolaceinate to form violacein and deoxyviolacein, respectively. This chain is Violacein synthase (vioC), found in Chromobacterium violaceum (strain ATCC 12472 / DSM 30191 / JCM 1249 / CCUG 213 / NBRC 12614 / NCIMB 9131 / NCTC 9757 / MK).